The chain runs to 223 residues: Triosephosphate isomerase (223 aa).

Residue 6–8 (NLK) coordinates substrate. Residue His-86 is the Electrophile of the active site. Glu-151 serves as the catalytic Proton acceptor. Substrate-binding residues include Gly-157 and Ser-187.

It belongs to the triosephosphate isomerase family. As to quaternary structure, homodimer.

It is found in the cytoplasm. The enzyme catalyses D-glyceraldehyde 3-phosphate = dihydroxyacetone phosphate. Its pathway is carbohydrate biosynthesis; gluconeogenesis. It functions in the pathway carbohydrate degradation; glycolysis; D-glyceraldehyde 3-phosphate from glycerone phosphate: step 1/1. Functionally, involved in the gluconeogenesis. Catalyzes stereospecifically the conversion of dihydroxyacetone phosphate (DHAP) to D-glyceraldehyde-3-phosphate (G3P). This is Triosephosphate isomerase from Campylobacter jejuni subsp. doylei (strain ATCC BAA-1458 / RM4099 / 269.97).